The sequence spans 509 residues: Bifunctional purine biosynthesis protein PurH (509 aa).

Residues Met-1–Val-144 form the MGS-like domain.

Belongs to the PurH family.

The enzyme catalyses (6R)-10-formyltetrahydrofolate + 5-amino-1-(5-phospho-beta-D-ribosyl)imidazole-4-carboxamide = 5-formamido-1-(5-phospho-D-ribosyl)imidazole-4-carboxamide + (6S)-5,6,7,8-tetrahydrofolate. The catalysed reaction is IMP + H2O = 5-formamido-1-(5-phospho-D-ribosyl)imidazole-4-carboxamide. Its pathway is purine metabolism; IMP biosynthesis via de novo pathway; 5-formamido-1-(5-phospho-D-ribosyl)imidazole-4-carboxamide from 5-amino-1-(5-phospho-D-ribosyl)imidazole-4-carboxamide (10-formyl THF route): step 1/1. The protein operates within purine metabolism; IMP biosynthesis via de novo pathway; IMP from 5-formamido-1-(5-phospho-D-ribosyl)imidazole-4-carboxamide: step 1/1. This chain is Bifunctional purine biosynthesis protein PurH, found in Listeria monocytogenes serotype 4b (strain F2365).